We begin with the raw amino-acid sequence, 642 residues long: Arginine--tRNA ligase, chloroplastic/mitochondrial (642 aa).

Residues 1–53 (MFIFPKDENRRETLTTKLRFSADHLTFTTVTEKLRATAWRFAFSSRAKSVVAM) constitute a chloroplast and mitochondrion transit peptide. N-acetylalanine is present on alanine 54. The 'HIGH' region motif lies at 190–201 (PNIAKEMHVGHL).

The protein belongs to the class-I aminoacyl-tRNA synthetase family.

It localises to the plastid. The protein resides in the chloroplast. It is found in the mitochondrion. The catalysed reaction is tRNA(Arg) + L-arginine + ATP = L-arginyl-tRNA(Arg) + AMP + diphosphate. Its function is as follows. Forms part of a macromolecular complex that catalyzes the attachment of specific amino acids to cognate tRNAs during protein synthesis. In Arabidopsis thaliana (Mouse-ear cress), this protein is Arginine--tRNA ligase, chloroplastic/mitochondrial.